A 184-amino-acid polypeptide reads, in one-letter code: Nucleoside triphosphate pyrophosphatase (184 aa).

Residue D71 is the Proton acceptor of the active site.

The protein belongs to the Maf family. It depends on a divalent metal cation as a cofactor.

The protein localises to the cytoplasm. It catalyses the reaction a ribonucleoside 5'-triphosphate + H2O = a ribonucleoside 5'-phosphate + diphosphate + H(+). The enzyme catalyses a 2'-deoxyribonucleoside 5'-triphosphate + H2O = a 2'-deoxyribonucleoside 5'-phosphate + diphosphate + H(+). Nucleoside triphosphate pyrophosphatase. May have a dual role in cell division arrest and in preventing the incorporation of modified nucleotides into cellular nucleic acids. The protein is Nucleoside triphosphate pyrophosphatase of Synechococcus sp. (strain CC9605).